A 735-amino-acid chain; its full sequence is ATP-dependent DNA helicase Hel308 (735 aa).

Residues Gln32 and 50–57 (APTGSGKT) contribute to the ATP site. The 165-residue stretch at 37 to 201 (QAGVEKGENL…WIGGKIVESS (165 aa)) folds into the Helicase ATP-binding domain. The DEAH box signature appears at 146–149 (DEIH). A Helicase C-terminal domain is found at 235-431 (DLDLAAEAIE…GLRGLRHFIL (197 aa)).

The protein belongs to the helicase family. Hel308 subfamily. Monomer.

It catalyses the reaction Couples ATP hydrolysis with the unwinding of duplex DNA by translocating in the 3'-5' direction.. The enzyme catalyses ATP + H2O = ADP + phosphate + H(+). DNA-dependent ATPase and 3'-5' DNA helicase that may be involved in repair of stalled replication forks. The sequence is that of ATP-dependent DNA helicase Hel308 from Aeropyrum pernix (strain ATCC 700893 / DSM 11879 / JCM 9820 / NBRC 100138 / K1).